Here is a 729-residue protein sequence, read N- to C-terminus: MTEIYEQAKHSLQGEDFSSFNYLFAVNKLLSNPVSYDLGRDLIVRALDSRERFSEHTTILKNMVRKSGLFPYLKKEFTSLTPDDLRVLELYRTPFSDGYVFHSMQFHIFDLLKSGQNVVLSAPTSMGKSAIVDSLLGMGTLKRLVLVVPTVALADETRRRLQERFGDRYQIIHHSSQVCHSDQAVYVLTQERVNERDDIVDIDLFVIDEFYKLAFRQLKSGDIDHQDERVIELNIALSKLLKVSRQFYLTGPFVNSIRGLEKLGYPHTFVSTDFNTVALDVKTFGIKANDDKAKLKALGEIAHACVDATIIYCKSPTVAGLVARELIRLGHGTPTENPHVDWVSEEFDADWDYTVALRNGIGLHFGALPRALQQYTADQFNAGKLRFLLCTSTIIEGVNTIAKNVVIYDNRDGTRSIDKFTHGNIKGRAGRMGVHFVGKIFCLEEIPEDNLNQEVDIPLGIQGIDTPINLLASVQPDHLSEFSQDRFDEVFINDRVSIDLVKKHSYFRVEQFEMLQSMFEMMDDNEFSSLVFHWTPATNFLKTFAKIIARLVPHTFSRNGVPVKPTDVMIAKLAGYLSAESYSEYLKNQIDYARQWISEGEKRTLSIALNNDLKLITNTFGYTLPKVLSLMEDVVKHHAVKRGIRSKVDYTHVKLAFESFHLPPGVNALEEIGIPIQTLHRLVDLLEFSDEADVDELSQYLRDTQDIWSRSIGYVDQMFIRRALGIRRH.

In terms of domain architecture, Helicase ATP-binding spans 109 to 271 (FDLLKSGQNV…KLGYPHTFVS (163 aa)). 122–129 (APTSMGKS) serves as a coordination point for ATP. One can recognise a Helicase C-terminal domain in the interval 297–472 (ALGEIAHACV…GIDTPINLLA (176 aa)).

This sequence belongs to the helicase family. Interacts with AbpB.

Its function is as follows. Part of an antiviral system composed of AbpA and AbpB; when both are expressed from a plasmid they confer resistance to phages T2, T4, T7 and lambda but not RB32 or RB69. Resistance is temperature dependent, it can be seen at 30 degrees Celsius but not at 37 or 42 degrees Celsius. The system impairs phage but not bacterial DNA synthesis (shown for T4, T7 and lambda). Partially suppressed by mutations in T4 gene 41, a replicative helicase. Functionally, deletion or mutations in this gene were selected in directed evolution experiments for resistance to intense ionizing radiation (3000 Gy). In Escherichia coli (strain K12), this protein is Anti-bacteriophage protein B.